We begin with the raw amino-acid sequence, 689 residues long: Glycine--tRNA ligase beta subunit (689 aa).

Belongs to the class-II aminoacyl-tRNA synthetase family. In terms of assembly, tetramer of two alpha and two beta subunits.

The protein resides in the cytoplasm. The catalysed reaction is tRNA(Gly) + glycine + ATP = glycyl-tRNA(Gly) + AMP + diphosphate. The protein is Glycine--tRNA ligase beta subunit of Shigella flexneri serotype 5b (strain 8401).